The chain runs to 1173 residues: AT-rich interactive domain-containing protein 5B (1173 aa).

A Glycyl lysine isopeptide (Lys-Gly) (interchain with G-Cter in SUMO2) cross-link involves residue Lys130. The segment at 249 to 283 (PNLKGRPRKKKPCPQRRDSFSGGKDPNNNSDGKSV) is disordered. The span at 253–262 (GRPRKKKPCP) shows a compositional bias: basic residues. The residue at position 267 (Ser267) is a Phosphoserine. In terms of domain architecture, ARID spans 322–414 (RADEQAFLVA…LILPYERFIK (93 aa)). An N6,N6-dimethyllysine modification is found at Lys340. Residues 416 to 607 (EEDKPLPPIK…QPPLANQSEV (192 aa)) form a disordered region. Residue Lys449 forms a Glycyl lysine isopeptide (Lys-Gly) (interchain with G-Cter in SUMO2) linkage. A compositionally biased stretch (basic and acidic residues) spans 450–462 (HEISKSKKEKENA). Residues Lys497 and Lys499 each participate in a glycyl lysine isopeptide (Lys-Gly) (interchain with G-Cter in SUMO2) cross-link. Over residues 547–557 (SAPLAPTPGTG) the composition is skewed to low complexity. Over residues 593 to 605 (GFSTTQPPLANQS) the composition is skewed to polar residues. Residues Lys763 and Lys769 each participate in a glycyl lysine isopeptide (Lys-Gly) (interchain with G-Cter in SUMO2) cross-link. 3 disordered regions span residues 777–802 (EPRF…VEKR), 877–924 (KKSA…GTSQ), and 936–965 (HPKA…KPHP). The segment covering 782 to 796 (FSKHHLSPSKKSRGR) has biased composition (basic residues). Residues Lys878, Lys901, Lys905, and Lys920 each participate in a glycyl lysine isopeptide (Lys-Gly) (interchain with G-Cter in SUMO2) cross-link. Glycyl lysine isopeptide (Lys-Gly) (interchain with G-Cter in SUMO2) cross-links involve residues Lys973, Lys985, and Lys998. At Ser1017 the chain carries Phosphoserine. The disordered stretch occupies residues 1017–1055 (SPLDPAKEVSGKEKASEQESEGSKAAHSGHSGGTSEGHK). Over residues 1021-1040 (PAKEVSGKEKASEQESEGSK) the composition is skewed to basic and acidic residues. Residues Lys1040 and Lys1055 each participate in a glycyl lysine isopeptide (Lys-Gly) (interchain with G-Cter in SUMO2) cross-link. Ser1118 is modified (phosphoserine).

It belongs to the ARID5B family. Post-translationally, methylation at Lys-340 prevents DNA-binding. Demethylation by PHF2 promotes recruitment of the PHF2-ARID5B complex to promoters.

The protein resides in the nucleus. Transcription coactivator that binds to the 5'-AATA[CT]-3' core sequence and plays a key role in adipogenesis and liver development. Acts by forming a complex with phosphorylated PHF2, which mediates demethylation at Lys-340, leading to target the PHF2-ARID5B complex to target promoters, where PHF2 mediates demethylation of dimethylated 'Lys-9' of histone H3 (H3K9me2), followed by transcription activation of target genes. The PHF2-ARID5B complex acts as a coactivator of HNF4A in liver. Required for adipogenesis: regulates triglyceride metabolism in adipocytes by regulating expression of adipogenic genes. Overexpression leads to induction of smooth muscle marker genes, suggesting that it may also act as a regulator of smooth muscle cell differentiation and proliferation. This Bos taurus (Bovine) protein is AT-rich interactive domain-containing protein 5B (ARID5B).